Reading from the N-terminus, the 495-residue chain is Aspartyl/glutamyl-tRNA(Asn/Gln) amidotransferase subunit B (495 aa).

The protein belongs to the GatB/GatE family. GatB subfamily. As to quaternary structure, heterotrimer of A, B and C subunits.

It carries out the reaction L-glutamyl-tRNA(Gln) + L-glutamine + ATP + H2O = L-glutaminyl-tRNA(Gln) + L-glutamate + ADP + phosphate + H(+). It catalyses the reaction L-aspartyl-tRNA(Asn) + L-glutamine + ATP + H2O = L-asparaginyl-tRNA(Asn) + L-glutamate + ADP + phosphate + 2 H(+). In terms of biological role, allows the formation of correctly charged Asn-tRNA(Asn) or Gln-tRNA(Gln) through the transamidation of misacylated Asp-tRNA(Asn) or Glu-tRNA(Gln) in organisms which lack either or both of asparaginyl-tRNA or glutaminyl-tRNA synthetases. The reaction takes place in the presence of glutamine and ATP through an activated phospho-Asp-tRNA(Asn) or phospho-Glu-tRNA(Gln). The protein is Aspartyl/glutamyl-tRNA(Asn/Gln) amidotransferase subunit B of Beijerinckia indica subsp. indica (strain ATCC 9039 / DSM 1715 / NCIMB 8712).